Here is a 148-residue protein sequence, read N- to C-terminus: MKIINILFCLFLLMLNGCNSNDNDTLKNNAQQTKSRRKRDLTQKEVTQEKPKSKEELLREKLNDDQKTQLDWLKTALTDAGEFDKFLENNEDKIKSALDHIKSELDKCNGKENGDVQKNTFKQVVQGALKGGIDGFGASNATTTCNGS.

Residues 1-17 (MKIINILFCLFLLMLNG) form the signal peptide. Cysteine 18 carries N-palmitoyl cysteine lipidation. Cysteine 18 carries the S-diacylglycerol cysteine lipid modification. The interval 26–61 (LKNNAQQTKSRRKRDLTQKEVTQEKPKSKEELLREK) is disordered. The segment covering 40 to 61 (DLTQKEVTQEKPKSKEELLREK) has biased composition (basic and acidic residues).

The protein belongs to the Multicopy lipoprotein (Mlp) family.

Its subcellular location is the cell outer membrane. An outer membrane protein that may participate in pathogenesis. Some human Lyme disease patients have antibodies against this protein. The Mlp proteins probably undergo intragenic recombination, generating new alleles. In Borreliella burgdorferi (strain ATCC 35210 / DSM 4680 / CIP 102532 / B31) (Borrelia burgdorferi), this protein is Lipoprotein MlpH.